Here is a 196-residue protein sequence, read N- to C-terminus: HTH-type transcriptional regulator UidR (196 aa).

An HTH tetR-type domain is found at 10 to 70 (QPTRTRILNA…AIILQDQERA (61 aa)). Positions 33 to 52 (SMKAICKSCAISPGTLYHHF) form a DNA-binding region, H-T-H motif.

Repressor for the uidRABC (gusRABC) operon. This Escherichia coli O157:H7 protein is HTH-type transcriptional regulator UidR (uidR).